Consider the following 54-residue polypeptide: UPF0057 membrane protein ssr1169 (54 aa).

Helical transmembrane passes span I3–I23 and L31–A51.

This sequence belongs to the UPF0057 (PMP3) family.

Its subcellular location is the cell membrane. The chain is UPF0057 membrane protein ssr1169 from Synechocystis sp. (strain ATCC 27184 / PCC 6803 / Kazusa).